Reading from the N-terminus, the 449-residue chain is Probable glycine dehydrogenase (decarboxylating) subunit 1 (449 aa).

It belongs to the GcvP family. N-terminal subunit subfamily. In terms of assembly, the glycine cleavage system is composed of four proteins: P, T, L and H. In this organism, the P 'protein' is a heterodimer of two subunits.

The catalysed reaction is N(6)-[(R)-lipoyl]-L-lysyl-[glycine-cleavage complex H protein] + glycine + H(+) = N(6)-[(R)-S(8)-aminomethyldihydrolipoyl]-L-lysyl-[glycine-cleavage complex H protein] + CO2. In terms of biological role, the glycine cleavage system catalyzes the degradation of glycine. The P protein binds the alpha-amino group of glycine through its pyridoxal phosphate cofactor; CO(2) is released and the remaining methylamine moiety is then transferred to the lipoamide cofactor of the H protein. This chain is Probable glycine dehydrogenase (decarboxylating) subunit 1, found in Oceanobacillus iheyensis (strain DSM 14371 / CIP 107618 / JCM 11309 / KCTC 3954 / HTE831).